The sequence spans 226 residues: MTTTELVALLHLASPALPIGAFSYSQGFEAALDANLIRDADTARDWIASGLTDVLAHGELPFLAHQLARWHAHDADALARENAWFIASRESAELRRETEQMGWSLAQLCTSLEWGDAARRATLATISPIALPTAFTYAAAAHDASADAVLAAYAFGWVENQTSAALKAVPLGQLAGQRIIVALRGAIDAAVRRALATPPDAVNTFAPQLGILSARHETQYSRLFRS.

It belongs to the UreF family. UreD, UreF and UreG form a complex that acts as a GTP-hydrolysis-dependent molecular chaperone, activating the urease apoprotein by helping to assemble the nickel containing metallocenter of UreC. The UreE protein probably delivers the nickel.

It localises to the cytoplasm. In terms of biological role, required for maturation of urease via the functional incorporation of the urease nickel metallocenter. In Burkholderia ambifaria (strain MC40-6), this protein is Urease accessory protein UreF.